A 221-amino-acid chain; its full sequence is Protein Pisl_1005 (221 aa).

Positions 8-201 (EEGAYLVKLA…EKTPGGEIYE (194 aa)) constitute an AMMECR1 domain.

The polypeptide is Protein Pisl_1005 (Pyrobaculum islandicum (strain DSM 4184 / JCM 9189 / GEO3)).